Reading from the N-terminus, the 307-residue chain is MSDPLLFVLLGPTGSGKTSLSIALAERFGGEIVNCDSVAVYRELDIGTAKPTHEERESVPHHLFDVLPPTEPMTAGEYARRAREVLKDIASRGKLPIVVGGTGLYLRALLDGLFAGPERSEELREHLRRREQERGPTYLHRILSRMDRVAAAKIHPNDAAKLIRAIEVCLAARKPMTELWQQGRDPLTGFRILRIGLDPDRPALYDRINRRAAEMFEQGLVEETQALLAKYGRIGGPLDSLGYRQAFELLDGKLTREQAVAAAQQGHRNYAKRQMTWFRREPEVRWLKGFGDDAAIVGEAMQIIKTS.

11–18 (GPTGSGKT) contacts ATP. Residue 13-18 (TGSGKT) participates in substrate binding. An interaction with substrate tRNA region spans residues 36–39 (DSVA).

It belongs to the IPP transferase family. Monomer. Mg(2+) is required as a cofactor.

It carries out the reaction adenosine(37) in tRNA + dimethylallyl diphosphate = N(6)-dimethylallyladenosine(37) in tRNA + diphosphate. Functionally, catalyzes the transfer of a dimethylallyl group onto the adenine at position 37 in tRNAs that read codons beginning with uridine, leading to the formation of N6-(dimethylallyl)adenosine (i(6)A). The polypeptide is tRNA dimethylallyltransferase (Koribacter versatilis (strain Ellin345)).